A 128-amino-acid chain; its full sequence is UPF0102 protein PSPTO_4420 (128 aa).

The protein belongs to the UPF0102 family.

In Pseudomonas syringae pv. tomato (strain ATCC BAA-871 / DC3000), this protein is UPF0102 protein PSPTO_4420.